Reading from the N-terminus, the 289-residue chain is MNGVINVYKPQNITSFDVVRIIKKISRIKKVGHTGTLDPMATGVLPICLGGSTKIVDFIMNEHKEYRAKLKLGLITDTYDREGKVLKEEDASKILEEEVVNCINSFKGEIIQIPPMYSAIKIKGERLYNLARKGIEVEREGRKINIYNIEVLKVNLPYVEFKVNCSKGTYIRSLCYDIGNKLGMGATMWELERTKTGNFSIENSINLEDINEENIQEFIIPAEKALSKYERIEIDEYFSRLLKNGVKVKDKRLLDKIKANDILRVYQEDKFIGLGQKTKEGFKIVKLLV.

Residue aspartate 38 is the Nucleophile of the active site.

Belongs to the pseudouridine synthase TruB family. Type 1 subfamily.

The enzyme catalyses uridine(55) in tRNA = pseudouridine(55) in tRNA. Functionally, responsible for synthesis of pseudouridine from uracil-55 in the psi GC loop of transfer RNAs. This Clostridium tetani (strain Massachusetts / E88) protein is tRNA pseudouridine synthase B.